The following is a 139-amino-acid chain: ATP synthase epsilon chain (139 aa).

The protein belongs to the ATPase epsilon chain family. F-type ATPases have 2 components, CF(1) - the catalytic core - and CF(0) - the membrane proton channel. CF(1) has five subunits: alpha(3), beta(3), gamma(1), delta(1), epsilon(1). CF(0) has three main subunits: a, b and c.

The protein localises to the cell membrane. Its function is as follows. Produces ATP from ADP in the presence of a proton gradient across the membrane. The protein is ATP synthase epsilon chain of Symbiobacterium thermophilum (strain DSM 24528 / JCM 14929 / IAM 14863 / T).